We begin with the raw amino-acid sequence, 421 residues long: Histidine--tRNA ligase (421 aa).

The protein belongs to the class-II aminoacyl-tRNA synthetase family. In terms of assembly, homodimer.

The protein localises to the cytoplasm. It catalyses the reaction tRNA(His) + L-histidine + ATP = L-histidyl-tRNA(His) + AMP + diphosphate + H(+). The chain is Histidine--tRNA ligase from Coxiella burnetii (strain CbuK_Q154) (Coxiella burnetii (strain Q154)).